The following is a 270-amino-acid chain: Glutamate racemase (270 aa).

Residues 14-15 and 46-47 each bind substrate; these read DS and YG. Catalysis depends on Cys-77, which acts as the Proton donor/acceptor. 78-79 is a substrate binding site; it reads NT. Cys-189 (proton donor/acceptor) is an active-site residue. 190–191 contributes to the substrate binding site; sequence TH.

This sequence belongs to the aspartate/glutamate racemases family.

The catalysed reaction is L-glutamate = D-glutamate. The protein operates within cell wall biogenesis; peptidoglycan biosynthesis. Functionally, provides the (R)-glutamate required for cell wall biosynthesis. The chain is Glutamate racemase from Neisseria meningitidis serogroup A / serotype 4A (strain DSM 15465 / Z2491).